The primary structure comprises 1222 residues: Serine/threonine-protein kinase WNK4 (1222 aa).

The segment covering methionine 1–glutamate 17 has biased composition (polar residues). Residues methionine 1–serine 165 are disordered. A compositionally biased stretch (low complexity) spans alanine 90–lysine 101. Residue serine 95 is modified to Phosphoserine. Basic and acidic residues predominate over residues glutamate 135–glutamate 152. Residues lysine 154 and lysine 172 each participate in a glycyl lysine isopeptide (Lys-Gly) (interchain with G-Cter in ubiquitin) cross-link. In terms of domain architecture, Protein kinase spans leucine 171–phenylalanine 429. Residue serine 181 coordinates ATP. Glycyl lysine isopeptide (Lys-Gly) (interchain with G-Cter in ubiquitin) cross-links involve residues lysine 183, lysine 223, and lysine 238. Residues threonine 251–methionine 254 and lysine 301 contribute to the ATP site. Aspartate 318 acts as the Proton acceptor in catalysis. A Glycyl lysine isopeptide (Lys-Gly) (interchain with G-Cter in ubiquitin) cross-link involves residue lysine 325. Phosphoserine; by autocatalysis is present on residues serine 328 and serine 332. Residues lysine 384, lysine 390, lysine 447, and lysine 451 each participate in a glycyl lysine isopeptide (Lys-Gly) (interchain with G-Cter in ubiquitin) cross-link. The disordered stretch occupies residues arginine 525–glutamine 562. Residues aspartate 533–proline 553 show a composition bias toward pro residues. Positions glutamate 554–glutamine 564 are interaction with KLHL3. The residue at position 572 (serine 572) is a Phosphoserine. Disordered regions lie at residues arginine 626–asparagine 659, aspartate 747–phenylalanine 809, serine 877–serine 896, and serine 927–leucine 976. Low complexity-rich tracts occupy residues serine 627–serine 638, alanine 757–alanine 769, serine 793–alanine 807, and serine 877–valine 890. The segment covering proline 935 to serine 944 has biased composition (pro residues). A compositionally biased stretch (polar residues) spans aspartate 953–glutamate 963. Lysine 990 participates in a covalent cross-link: Glycyl lysine isopeptide (Lys-Gly) (interchain with G-Cter in ubiquitin). Positions arginine 996–valine 999 match the RFXV motif motif. The segment at threonine 1000 to proline 1087 is disordered. Position 1014 is a phosphoserine (serine 1014). Over residues serine 1014 to serine 1032 the composition is skewed to low complexity. Basic and acidic residues predominate over residues glutamate 1044–alanine 1056. Residues lysine 1123, lysine 1136, and lysine 1137 each participate in a glycyl lysine isopeptide (Lys-Gly) (interchain with G-Cter in ubiquitin) cross-link. Residues arginine 1166–methionine 1222 form a disordered region. Polar residues-rich tracts occupy residues serine 1172–arginine 1183 and asparagine 1195–glutamine 1207. Phosphoserine is present on serine 1196.

Belongs to the protein kinase superfamily. Ser/Thr protein kinase family. WNK subfamily. Interacts with the C-terminal region of KCNJ1. Interacts with WNK1 and WNK3. Interacts with KLHL3. The cofactor is Mg(2+). In terms of processing, autophosphorylated at Ser-328 and Ser-332, promoting its activation. Phosphorylated by WNK1 and WNK3. Phosphorylated at Ser-572 in a MAP3K15/ASK3-dependent process in response to osmotic stress or hypotonic low-chloride stimulation. Post-translationally, ubiquitinated by the BCR(KLHL3) complex, leading to its degradation. Also ubiquitinated by the BCR(KLHL2) complex. As to expression, locates to the distal convoluted tubule, the medullary collecting duct and the cortical collecting duct of the kidney. Expressed in pancreatic duct.

Its subcellular location is the cell junction. It is found in the tight junction. The catalysed reaction is L-seryl-[protein] + ATP = O-phospho-L-seryl-[protein] + ADP + H(+). It catalyses the reaction L-threonyl-[protein] + ATP = O-phospho-L-threonyl-[protein] + ADP + H(+). With respect to regulation, activation requires autophosphorylation of Ser-328 and Ser-332. Autophosphorylation and subsequent activation is inhibited by increases in intracellular ionic strength: Cl(-) potently inhibits WNK4 kinase activity via direct binding. Also inhibited by K(+) ions. Serine/threonine-protein kinase component of the WNK4-SPAK/OSR1 kinase cascade, which acts as a key regulator of ion transport in the distal nephron and blood pressure. The WNK4-SPAK/OSR1 kinase cascade is composed of WNK4, which mediates phosphorylation and activation of downstream kinases OXSR1/OSR1 and STK39/SPAK. Following activation, OXSR1/OSR1 and STK39/SPAK catalyze phosphorylation of ion cotransporters, such as SLC12A1/NKCC2, SLC12A2/NKCC1, SLC12A3/NCC, SLC12A5/KCC2 or SLC12A6/KCC3, regulating their activity. Acts as a molecular switch that regulates the balance between renal salt reabsorption and K(+) secretion by modulating the activities of renal transporters and channels, including the Na-Cl cotransporter SLC12A3/NCC and the K(+) channel, KCNJ1/ROMK. Regulates NaCl reabsorption in the distal nephron by activating the thiazide-sensitive Na-Cl cotransporter SLC12A3/NCC in distal convoluted tubule cells of kidney: activates SLC12A3/NCC in a OXSR1/OSR1- and STK39/SPAK-dependent process. Also acts as a scaffold protein independently of its protein kinase activity: negatively regulates cell membrane localization of various transporters and channels (CFTR, KCNJ1/ROMK, SLC4A4, SLC26A9 and TRPV4) by clathrin-dependent endocytosis. Also inhibits the activity of the epithelial Na(+) channel (ENaC) SCNN1A, SCNN1B, SCNN1D in a inase-independent mechanism. May also phosphorylate NEDD4L. This chain is Serine/threonine-protein kinase WNK4, found in Mus musculus (Mouse).